The primary structure comprises 299 residues: ATP phosphoribosyltransferase (299 aa).

This sequence belongs to the ATP phosphoribosyltransferase family. Long subfamily. Mg(2+) is required as a cofactor.

It is found in the cytoplasm. The catalysed reaction is 1-(5-phospho-beta-D-ribosyl)-ATP + diphosphate = 5-phospho-alpha-D-ribose 1-diphosphate + ATP. It functions in the pathway amino-acid biosynthesis; L-histidine biosynthesis; L-histidine from 5-phospho-alpha-D-ribose 1-diphosphate: step 1/9. Its activity is regulated as follows. Feedback inhibited by histidine. Catalyzes the condensation of ATP and 5-phosphoribose 1-diphosphate to form N'-(5'-phosphoribosyl)-ATP (PR-ATP). Has a crucial role in the pathway because the rate of histidine biosynthesis seems to be controlled primarily by regulation of HisG enzymatic activity. The protein is ATP phosphoribosyltransferase of Shewanella pealeana (strain ATCC 700345 / ANG-SQ1).